Here is a 316-residue protein sequence, read N- to C-terminus: Phospholipase A1 3 (316 aa).

The signal sequence occupies residues 1-4 (ADDL). A propeptide spanning residues 5–14 (TTLRNGTLDR) is cleaved from the precursor. An intrachain disulfide couples C20 to C103. The active-site Nucleophile is S153. The Charge relay system role is filled by D181. 2 disulfide bridges follow: C192–C197 and C235–C240. H242 (charge relay system) is an active-site residue. 3 cysteine pairs are disulfide-bonded: C257–C284, C258–C309, and C277–C282.

This sequence belongs to the AB hydrolase superfamily. Lipase family. In terms of tissue distribution, expressed by the venom gland.

Its subcellular location is the secreted. The enzyme catalyses a 1,2-diacyl-sn-glycero-3-phosphocholine + H2O = a 2-acyl-sn-glycero-3-phosphocholine + a fatty acid + H(+). In terms of biological role, catalyzes the hydrolysis of phosphatidylcholine with phospholipase A1 activity. May act as an allergen and induce hemolytic activity. The chain is Phospholipase A1 3 from Polistes dominula (European paper wasp).